We begin with the raw amino-acid sequence, 54 residues long: Apelin receptor early endogenous ligand (54 aa).

The first 23 residues, 1–23 (MRFQPLFWVFFIFAMSLLFISEQ), serve as a signal peptide directing secretion.

This sequence belongs to the Elabela/Toddler family. Interacts with APLNR. As to expression, expressed in the placenta. Expressed in syncytiotrophoblasts of the placenta labyrinth at 10.5 dpc. Expressed in placental chorionic trophoblasts (at protein level). Expressed in a small population of epiblast cells in the distal half of the embryo at 7 dpc. Expressed in newly formed definitive endoderm cells in the proximal half of the embryo, while it is not present in extra-embryonic endoderm at 7.5 dpc. This expression pattern then changes to the ventral aspect of the developing foregut pocket and the entire hindgut pocket at 8.5 dpc, before becoming restricted to the foregut overlying the heart and the posterior-most hindgut. Not detected in endothelial precursor cells of the yolk sac at 8 dpc. Expressed in extraembryonic tissues as well as in the chorion at 8.25 dpc. Expressed in endometrial stroma of the uterus of pregnant mice at 8.5 dpc. Expressed in the developing heart, caudal neural tube and trophobasts at 9 dpc. Expressed in the chorionic plate of the chorioallantoic placenta at 9 dpc. Expressed in the posterior half of the ventral neural tube at 9.25 dpc. Expressed in trophoblast cells at the periphery of the placenta at 9.5 dpc. Expressed in collecting ducts of the kidney of pregnant mice at 10.5 dpc. Expressed in the epicardium of the developing heart at 11.5 dpc. Expressed weakly in the adult heart. Expressed in endothelial cells and fibroblasts and weakly in cardiomyocytes.

Its subcellular location is the secreted. The protein localises to the extracellular space. Its function is as follows. Peptide hormone that functions as endogenous ligand for the G-protein-coupled apelin receptor (APLNR/APJ), that plays a role in the regulation of normal cardiovascular function and fluid homeostasis. Functions as a balanced agonist activating both G(i) protein pathway and beta-arrestin pathway of APLNR. Downstream G proteins activation, apelin can inhibit cAMP production and activate key intracellular effectors such as ERKs. On the other hand, APLNR activation induces beta-arrestin recruitment to the membrane leading to desensitization and internalization of the receptor. Required for mesendodermal differentiation, blood vessels formation and heart morphogenesis during early development and for adult cardiovascular homeostasis. Acts as a motogen by promoting mesendodermal cell migration during gastrulation by binding and activating APLNR. Acts as an early embryonic regulator of cellular movement with a role in migration and development of cardiac progenitor cells. May act as a chemoattractant for the activation of angioblast migration toward the embryonic midline, i.e. the position of the future vessel formation, during vasculogenesis. Positively regulates sinus venosus (SV)-derived endothelial cells migration into the developing heart to promote coronary blood vessel sprouting. Plays a role in placental vascular development; promotes placental trophoblast invasion and spiral artery remodeling in the uterus. Involved in the regulation of maternal cardiovascular homeostasis to prevent gestational hypertension and for potent cardioprotective functions during heart failure. Mediates myocardial contractility in an ERK1/2-dependent manner. The chain is Apelin receptor early endogenous ligand from Mus musculus (Mouse).